An 842-amino-acid polypeptide reads, in one-letter code: Elongation factor G, mitochondrial (842 aa).

A mitochondrion-targeting transit peptide spans 1–58 (MVAIPRVAAARSLARQLARQSLRTTSFASAPVRIAIASTPLARSPSSFRSLSSSTRRS). In terms of domain architecture, tr-type G spans 93–398 (VRQRNVGISA…GVCSYLPNPA (306 aa)). GTP-binding positions include 102-109 (AHIDSGKT), 196-200 (DTPGH), and 250-253 (NKMD). The interval 423-442 (AGEDQEAAAEARKNAAPPVL) is disordered.

The protein belongs to the TRAFAC class translation factor GTPase superfamily. Classic translation factor GTPase family. EF-G/EF-2 subfamily.

Its subcellular location is the mitochondrion. It functions in the pathway protein biosynthesis; polypeptide chain elongation. Its function is as follows. Mitochondrial GTPase that catalyzes the GTP-dependent ribosomal translocation step during translation elongation. During this step, the ribosome changes from the pre-translocational (PRE) to the post-translocational (POST) state as the newly formed A-site-bound peptidyl-tRNA and P-site-bound deacylated tRNA move to the P and E sites, respectively. Catalyzes the coordinated movement of the two tRNA molecules, the mRNA and conformational changes in the ribosome. This chain is Elongation factor G, mitochondrial, found in Mycosarcoma maydis (Corn smut fungus).